Consider the following 214-residue polypeptide: MCPHALIPFKPAGPKSRLSGILSPEEREAFARAMLEDVIAAARDANCSPVIVATELFDSEDVQITIADKDLSGTLNEVLSQAAGPVLILMADLPLATGPAIKRVASTTSDIGIVPGRGGGTNAIFVREPAKFHVDYYGMSFLKHIRIAQEAGLSCEVIDSFLLHTDIDEEDDLVELLTHGSGKSRKYLEDLGFVLSAENGRVGVKRPVQPAPAT.

The protein belongs to the CofC family. As to quaternary structure, homodimer.

It carries out the reaction (2S)-2-phospholactate + GTP + H(+) = (2S)-lactyl-2-diphospho-5'-guanosine + diphosphate. It functions in the pathway cofactor biosynthesis; coenzyme F420 biosynthesis. Its function is as follows. Guanylyltransferase that catalyzes the activation of (2S)-2-phospholactate (2-PL) as (2S)-lactyl-2-diphospho-5'-guanosine, via the condensation of 2-PL with GTP. It is involved in the biosynthesis of coenzyme F420, a hydride carrier cofactor. The protein is 2-phospho-L-lactate guanylyltransferase of Methanoregula boonei (strain DSM 21154 / JCM 14090 / 6A8).